The sequence spans 175 residues: ATP synthase subunit b (175 aa).

Residues 13–33 traverse the membrane as a helical segment; sequence LLSPNPGLIFWTAVTFLLLLL.

It belongs to the ATPase B chain family. As to quaternary structure, F-type ATPases have 2 components, F(1) - the catalytic core - and F(0) - the membrane proton channel. F(1) has five subunits: alpha(3), beta(3), gamma(1), delta(1), epsilon(1). F(0) has four main subunits: a(1), b(2) and c(10-14). The alpha and beta chains form an alternating ring which encloses part of the gamma chain. F(1) is attached to F(0) by a central stalk formed by the gamma and epsilon chains, while a peripheral stalk is formed by the delta and b chains.

Its subcellular location is the cell inner membrane. Its function is as follows. F(1)F(0) ATP synthase produces ATP from ADP in the presence of a proton or sodium gradient. F-type ATPases consist of two structural domains, F(1) containing the extramembraneous catalytic core and F(0) containing the membrane proton channel, linked together by a central stalk and a peripheral stalk. During catalysis, ATP synthesis in the catalytic domain of F(1) is coupled via a rotary mechanism of the central stalk subunits to proton translocation. Component of the F(0) channel, it forms part of the peripheral stalk, linking F(1) to F(0). The polypeptide is ATP synthase subunit b (Chloroherpeton thalassium (strain ATCC 35110 / GB-78)).